Reading from the N-terminus, the 241-residue chain is Uracil-DNA glycosylase (241 aa).

Catalysis depends on D71, which acts as the Proton acceptor.

It belongs to the uracil-DNA glycosylase (UDG) superfamily. UNG family.

The protein resides in the cytoplasm. The catalysed reaction is Hydrolyzes single-stranded DNA or mismatched double-stranded DNA and polynucleotides, releasing free uracil.. Its function is as follows. Excises uracil residues from the DNA which can arise as a result of misincorporation of dUMP residues by DNA polymerase or due to deamination of cytosine. The polypeptide is Uracil-DNA glycosylase (Xanthomonas campestris pv. campestris (strain 8004)).